The chain runs to 87 residues: Small ribosomal subunit protein uS15 (87 aa).

It belongs to the universal ribosomal protein uS15 family. Part of the 30S ribosomal subunit. Forms a bridge to the 50S subunit in the 70S ribosome, contacting the 23S rRNA.

In terms of biological role, one of the primary rRNA binding proteins, it binds directly to 16S rRNA where it helps nucleate assembly of the platform of the 30S subunit by binding and bridging several RNA helices of the 16S rRNA. Its function is as follows. Forms an intersubunit bridge (bridge B4) with the 23S rRNA of the 50S subunit in the ribosome. The polypeptide is Small ribosomal subunit protein uS15 (Clostridium perfringens (strain ATCC 13124 / DSM 756 / JCM 1290 / NCIMB 6125 / NCTC 8237 / Type A)).